The following is a 150-amino-acid chain: uncharacterized protein (150 aa).

The Flavodoxin-like domain maps to 4 to 148; it reads LILYKSIHHK…KAKEFAKSIL (145 aa).

This is an uncharacterized protein from Methanocaldococcus jannaschii (strain ATCC 43067 / DSM 2661 / JAL-1 / JCM 10045 / NBRC 100440) (Methanococcus jannaschii).